The following is a 288-amino-acid chain: Small ribosomal subunit protein uS3 (288 aa).

The 69-residue stretch at 38–106 folds into the KH type-2 domain; the sequence is IRRMMSKGLE…QVQLNIIEVK (69 aa). The interval 209–288 is disordered; the sequence is PGRETPAEAP…TQPAETQQEG (80 aa). A compositionally biased stretch (basic and acidic residues) spans 219–232; that stretch reads SRPRRERGDRSERP. Residues 249–264 are compositionally biased toward low complexity; the sequence is AGRAAATTIAQAAETP. Over residues 277 to 288 the composition is skewed to polar residues; that stretch reads AATQPAETQQEG.

Belongs to the universal ribosomal protein uS3 family. Part of the 30S ribosomal subunit. Forms a tight complex with proteins S10 and S14.

Functionally, binds the lower part of the 30S subunit head. Binds mRNA in the 70S ribosome, positioning it for translation. In Salinispora tropica (strain ATCC BAA-916 / DSM 44818 / JCM 13857 / NBRC 105044 / CNB-440), this protein is Small ribosomal subunit protein uS3.